A 261-amino-acid polypeptide reads, in one-letter code: MGSSESAEARRVSFEMDEEERVRVLQGIRLSESVVNRMKDCSQPSAGEQLAPGPGPECSVPVPTVPQPTIPVLTVPSPSVCGPAEGTYKAPQGDFKVSRAENSDGQQSSAVKEDLKKFQQEQLAVQDELVKVARKEKEATEKHLKASLPKKKATHEQQQSDRLTRELKNREAELSRRDTFYKEQQERIQEKNAELYKLSSQQFHEAASKAESTIKPRRVEPVCSGLQAQILRCYRDHLHEVLLCSDLAKAYQHCVSTARKG.

Glycine 2 carries the N-myristoyl glycine lipid modification. Residues serine 13, serine 31, and serine 33 each carry the phosphoserine modification. Disordered stretches follow at residues 39 to 59, 81 to 114, and 140 to 165; these read KDCSQPSAGEQLAPGPGPECS, CGPAEGTYKAPQGDFKVSRAENSDGQQSSAVKED, and TEKHLKASLPKKKATHEQQQSDRLTR. Positions 109–202 form a coiled coil; sequence SAVKEDLKKF…AELYKLSSQQ (94 aa). Positions 154-165 are enriched in basic and acidic residues; sequence THEQQQSDRLTR. The CHCH domain maps to 220–261; that stretch reads EPVCSGLQAQILRCYRDHLHEVLLCSDLAKAYQHCVSTARKG. 2 consecutive short sequence motifs (cx9C motif) follow at residues 223–233 and 244–254; these read CSGLQAQILRC and CSDLAKAYQHC. Cystine bridges form between cysteine 223–cysteine 254 and cysteine 233–cysteine 244.

The protein belongs to the MICOS complex subunit Mic19 family. Metazoan Mic25 subfamily. As to quaternary structure, component of the mitochondrial contact site and cristae organizing system (MICOS) complex, composed of at least MICOS10/MIC10, CHCHD3/MIC19, CHCHD6/MIC25, APOOL/MIC27, IMMT/MIC60, APOO/MIC23/MIC26 and MICOS13/MIC13. This complex was also known under the names MINOS or MitOS complex. The MICOS complex associates with mitochondrial outer membrane proteins SAMM50, MTX1 and MTX2 (together described as components of the mitochondrial outer membrane sorting assembly machinery (SAM) complex) and DNAJC11, mitochondrial inner membrane protein TMEM11 and with HSPA9. The MICOS and SAM complexes together with DNAJC11 are part of a large protein complex spanning both membranes termed the mitochondrial intermembrane space bridging (MIB) complex. Interacts with DISC1. Interacts with IMMT/MIC60.

Its subcellular location is the mitochondrion inner membrane. It localises to the mitochondrion. Its function is as follows. Component of the MICOS complex, a large protein complex of the mitochondrial inner membrane that plays crucial roles in the maintenance of crista junctions, inner membrane architecture, and formation of contact sites to the outer membrane. This is MICOS complex subunit Mic25 (Chchd6) from Rattus norvegicus (Rat).